The primary structure comprises 444 residues: Tol-Pal system protein TolB (444 aa).

The first 18 residues, 1 to 18 (MKNIIYCILLLFSFNSYA), serve as a signal peptide directing secretion.

Belongs to the TolB family. As to quaternary structure, the Tol-Pal system is composed of five core proteins: the inner membrane proteins TolA, TolQ and TolR, the periplasmic protein TolB and the outer membrane protein Pal. They form a network linking the inner and outer membranes and the peptidoglycan layer.

Its subcellular location is the periplasm. In terms of biological role, part of the Tol-Pal system, which plays a role in outer membrane invagination during cell division and is important for maintaining outer membrane integrity. This Rickettsia bellii (strain OSU 85-389) protein is Tol-Pal system protein TolB.